The following is a 261-amino-acid chain: Glucose 1-dehydrogenase 1 (261 aa).

Position 11-35 (11-35 (VITGSSTGLGKAMAIRFATEKAKVV)) interacts with NADP(+). Residue Ser145 participates in substrate binding. The active-site Proton acceptor is Tyr158.

Belongs to the short-chain dehydrogenases/reductases (SDR) family. In terms of assembly, homotetramer.

The catalysed reaction is D-glucose + NAD(+) = D-glucono-1,5-lactone + NADH + H(+). It catalyses the reaction D-glucose + NADP(+) = D-glucono-1,5-lactone + NADPH + H(+). In terms of biological role, may play some role in spore germination. The protein is Glucose 1-dehydrogenase 1 (gdhI) of Priestia megaterium (Bacillus megaterium).